The following is a 276-amino-acid chain: Glucosamine-6-phosphate deaminase 2 (276 aa).

Catalysis depends on aspartate 72, which acts as the Proton acceptor; for enolization step. Residues 103–131 (NAHILDGNAADLQAECDAFEEKIKEAGGI) are a coiled coil. The For ring-opening step role is filled by aspartate 141. Histidine 143 acts as the Proton acceptor; for ring-opening step in catalysis. The active-site For ring-opening step is the glutamate 148. Threonine 161 carries the phosphothreonine modification.

The protein belongs to the glucosamine/galactosamine-6-phosphate isomerase family. In terms of assembly, homohexamer.

The protein localises to the cytoplasm. The catalysed reaction is alpha-D-glucosamine 6-phosphate + H2O = beta-D-fructose 6-phosphate + NH4(+). The protein operates within nucleotide-sugar biosynthesis; UDP-N-acetyl-alpha-D-glucosamine biosynthesis; alpha-D-glucosamine 6-phosphate from D-fructose 6-phosphate: step 1/1. Its activity is regulated as follows. Allosterically activated by N-acetylglucosamine-6-phosphate (GlcNAc6P). In terms of biological role, catalyzes the reversible conversion of alpha-D-glucosamine 6-phosphate (GlcN-6P) into beta-D-fructose 6-phosphate (Fru-6P) and ammonium ion, a regulatory reaction step in de novo uridine diphosphate-N-acetyl-alpha-D-glucosamine (UDP-GlcNAc) biosynthesis via hexosamine pathway. Deamination is coupled to aldo-keto isomerization mediating the metabolic flux from UDP-GlcNAc toward Fru-6P. At high ammonium level can drive amination and isomerization of Fru-6P toward hexosamines and UDP-GlcNAc synthesis. Has a role in fine tuning the metabolic fluctuations of cytosolic UDP-GlcNAc and their effects on hyaluronan synthesis that occur during tissue remodeling. The sequence is that of Glucosamine-6-phosphate deaminase 2 from Mus musculus (Mouse).